We begin with the raw amino-acid sequence, 500 residues long: Toluene-4-monooxygenase system, hydroxylase component subunit alpha (500 aa).

Fe cation-binding residues include glutamate 104, glutamate 134, histidine 137, glutamate 197, glutamate 231, and histidine 234.

It belongs to the TmoA/XamoA family. In terms of assembly, the alkene monooxygenase multicomponent enzyme system is composed of an electron transfer component and a monooxygenase component interacting with the effector protein TmoD. The electron transfer component is composed of a ferredoxin reductase (TmoF) and a ferredoxin (TmoC), and the monooxygenase component is formed by a heterohexamer (dimer of heterotrimers) of two alpha subunits (TmoA), two beta subunits (TmoE) and two gamma subunits (TmoB). It depends on Fe(2+) as a cofactor.

The enzyme catalyses toluene + NADH + O2 + H(+) = 4-methylphenol + NAD(+) + H2O. It functions in the pathway xenobiotic degradation; toluene degradation. Its activity is regulated as follows. Inhibited by Zn(2+) and Cu(2+). Component of the toluene-4-monooxygenase multicomponent enzyme system which catalyzes the O2- and NADH-dependent hydroxylation of toluene to form p-cresol. Also able to convert benzene to phenol, catechol, and 1,2,3-trihydroxybenzene by successive hydroxylations. The polypeptide is Toluene-4-monooxygenase system, hydroxylase component subunit alpha (Ectopseudomonas mendocina (Pseudomonas mendocina)).